The following is a 139-amino-acid chain: Ribulose bisphosphate carboxylase small subunit (139 aa).

The protein belongs to the RuBisCO small chain family. Heterohexadecamer of 8 large and 8 small subunits.

It is found in the plastid. It localises to the chloroplast. RuBisCO catalyzes two reactions: the carboxylation of D-ribulose 1,5-bisphosphate, the primary event in carbon dioxide fixation, as well as the oxidative fragmentation of the pentose substrate in the photorespiration process. Both reactions occur simultaneously and in competition at the same active site. Although the small subunit is not catalytic it is essential for maximal activity. In Detonula confervacea (Marine diatom), this protein is Ribulose bisphosphate carboxylase small subunit.